Reading from the N-terminus, the 512-residue chain is ETS translocation variant 3 (512 aa).

The ETS DNA-binding region spans 35–116 (IQLWHFILEL…KGKRFTYKFN (82 aa)). The disordered stretch occupies residues 138 to 196 (QSAPPVPTASSRFHFPPLDTHSPTSDVQPGRFSASSLTASGQESSNGTDRKAELSXLED). 3 positions are modified to phosphoserine: Ser-139, Ser-159, and Ser-315. Polar residues predominate over residues 158–184 (HSPTSDVQPGRFSASSLTASGQESSNG). Residues 341 to 512 (QFSIKLQPPP…QGLATAAADA (172 aa)) form a disordered region. The segment covering 380–406 (IKVEPASEKDAESLRQSAREKEEHTXE) has biased composition (basic and acidic residues). A Glycyl lysine isopeptide (Lys-Gly) (interchain with G-Cter in SUMO2) cross-link involves residue Lys-381. Lys-388 is modified (N6-acetyllysine; alternate). Lys-388 participates in a covalent cross-link: Glycyl lysine isopeptide (Lys-Gly) (interchain with G-Cter in SUMO2); alternate. A compositionally biased stretch (acidic residues) spans 443–452 (EPLEVTEDIE). 2 stretches are compositionally biased toward basic and acidic residues: residues 453 to 468 (DRPGKEPSAPEKKEDA) and 479 to 491 (RWNDDPEARELSK).

It belongs to the ETS family.

The protein localises to the nucleus. In terms of biological role, transcriptional repressor that contribute to growth arrest during terminal macrophage differentiation by repressing target genes involved in Ras-dependent proliferation. Represses MMP1 promoter activity. This is ETS translocation variant 3 (ETV3) from Ateles geoffroyi (Black-handed spider monkey).